The sequence spans 203 residues: 5-formyltetrahydrofolate cyclo-ligase (203 aa).

Position 2 is an N-acetylalanine (Ala2). Residues 10–14 and Arg14 each bind ATP; that span reads KRGLR. Residues Leu56, Glu61, and 148–152 each bind substrate; that span reads RGKGY. Residue 145-153 participates in ATP binding; it reads RLGRGKGYY. Mg(2+) is bound by residues Asp154 and Asp189.

This sequence belongs to the 5-formyltetrahydrofolate cyclo-ligase family. As to quaternary structure, monomer. Mg(2+) serves as cofactor.

It is found in the cytoplasm. The enzyme catalyses (6S)-5-formyl-5,6,7,8-tetrahydrofolate + ATP = (6R)-5,10-methenyltetrahydrofolate + ADP + phosphate. In terms of biological role, contributes to tetrahydrofolate metabolism. Helps regulate carbon flow through the folate-dependent one-carbon metabolic network that supplies carbon for the biosynthesis of purines, thymidine and amino acids. Catalyzes the irreversible conversion of 5-formyltetrahydrofolate (5-CHO-H(4)PteGlu) to yield 5,10-methenyltetrahydrofolate. The sequence is that of 5-formyltetrahydrofolate cyclo-ligase (Mthfs) from Mus musculus (Mouse).